The primary structure comprises 311 residues: Acetyl-coenzyme A carboxylase carboxyl transferase subunit alpha (311 aa).

One can recognise a CoA carboxyltransferase C-terminal domain in the interval 36-286; it reads NLEKEVAKVY…ASYFVSKLEK (251 aa).

The protein belongs to the AccA family. Acetyl-CoA carboxylase is a heterohexamer composed of biotin carboxyl carrier protein (AccB), biotin carboxylase (AccC) and two subunits each of ACCase subunit alpha (AccA) and ACCase subunit beta (AccD).

The protein localises to the cytoplasm. The catalysed reaction is N(6)-carboxybiotinyl-L-lysyl-[protein] + acetyl-CoA = N(6)-biotinyl-L-lysyl-[protein] + malonyl-CoA. The protein operates within lipid metabolism; malonyl-CoA biosynthesis; malonyl-CoA from acetyl-CoA: step 1/1. In terms of biological role, component of the acetyl coenzyme A carboxylase (ACC) complex. First, biotin carboxylase catalyzes the carboxylation of biotin on its carrier protein (BCCP) and then the CO(2) group is transferred by the carboxyltransferase to acetyl-CoA to form malonyl-CoA. This chain is Acetyl-coenzyme A carboxylase carboxyl transferase subunit alpha, found in Campylobacter curvus (strain 525.92).